A 529-amino-acid chain; its full sequence is Bifunctional purine biosynthesis protein PurH (529 aa).

The 148-residue stretch at 1–148 (MQQRRPVRRA…KNHKDVAIVV (148 aa)) folds into the MGS-like domain. Lysine 287 is subject to N6-acetyllysine.

It belongs to the PurH family.

It catalyses the reaction (6R)-10-formyltetrahydrofolate + 5-amino-1-(5-phospho-beta-D-ribosyl)imidazole-4-carboxamide = 5-formamido-1-(5-phospho-D-ribosyl)imidazole-4-carboxamide + (6S)-5,6,7,8-tetrahydrofolate. It carries out the reaction IMP + H2O = 5-formamido-1-(5-phospho-D-ribosyl)imidazole-4-carboxamide. It functions in the pathway purine metabolism; IMP biosynthesis via de novo pathway; 5-formamido-1-(5-phospho-D-ribosyl)imidazole-4-carboxamide from 5-amino-1-(5-phospho-D-ribosyl)imidazole-4-carboxamide (10-formyl THF route): step 1/1. The protein operates within purine metabolism; IMP biosynthesis via de novo pathway; IMP from 5-formamido-1-(5-phospho-D-ribosyl)imidazole-4-carboxamide: step 1/1. In Escherichia fergusonii (strain ATCC 35469 / DSM 13698 / CCUG 18766 / IAM 14443 / JCM 21226 / LMG 7866 / NBRC 102419 / NCTC 12128 / CDC 0568-73), this protein is Bifunctional purine biosynthesis protein PurH.